Reading from the N-terminus, the 327-residue chain is Expansin-B7 (327 aa).

Positions 1–30 (MAGRSRRRSFWSVGVAAALLCLLAAHGCSA) are cleaved as a signal peptide. The interval 30-88 (AKHHKPKPTPGGISGNASSSSSNSSTPSIPPPVAPTPTAPTPPIPSPGTGSSNGSSGGG) is disordered. A compositionally biased stretch (low complexity) spans 44 to 56 (GNASSSSSNSSTP). Residues Asn-45 and Asn-52 are each glycosylated (N-linked (GlcNAc...) asparagine). Pro residues predominate over residues 57 to 75 (SIPPPVAPTPTAPTPPIPS). Residue Asn-82 is glycosylated (N-linked (GlcNAc...) asparagine). In terms of domain architecture, Expansin-like EG45 spans 112–218 (GGACGFKNVN…RRVPCQYPGL (107 aa)). Cystine bridges form between Cys-115–Cys-143, Cys-146–Cys-213, and Cys-151–Cys-157. Residues 231 to 322 (VYMAILVEYE…DWQPNTVYSS (92 aa)) enclose the Expansin-like CBD domain. Asn-298 is a glycosylation site (N-linked (GlcNAc...) asparagine).

Belongs to the expansin family. Expansin B subfamily.

The protein resides in the secreted. It localises to the cell wall. It is found in the membrane. May cause loosening and extension of plant cell walls by disrupting non-covalent bonding between cellulose microfibrils and matrix glucans. No enzymatic activity has been found. May be required for rapid internodal elongation in deepwater rice during submergence. This Oryza sativa subsp. japonica (Rice) protein is Expansin-B7 (EXPB7).